Reading from the N-terminus, the 477-residue chain is Cysteine--tRNA ligase (477 aa).

A Zn(2+)-binding site is contributed by Cys29. The short motif at 31–41 (PTVQASPHIGH) is the 'HIGH' region element. Zn(2+) is bound by residues Cys219, His244, and Glu248. The 'KMSKS' region motif lies at 275 to 279 (KMSKS). Lys278 is a binding site for ATP.

The protein belongs to the class-I aminoacyl-tRNA synthetase family. As to quaternary structure, monomer. Zn(2+) serves as cofactor.

The protein localises to the cytoplasm. It carries out the reaction tRNA(Cys) + L-cysteine + ATP = L-cysteinyl-tRNA(Cys) + AMP + diphosphate. This chain is Cysteine--tRNA ligase, found in Leifsonia xyli subsp. xyli (strain CTCB07).